A 359-amino-acid chain; its full sequence is Serine/threonine-protein phosphatase 2A activator 2 (359 aa).

This sequence belongs to the PTPA-type PPIase family.

Its subcellular location is the cytoplasm. It catalyses the reaction [protein]-peptidylproline (omega=180) = [protein]-peptidylproline (omega=0). Functionally, PPIases accelerate the folding of proteins. It catalyzes the cis-trans isomerization of proline imidic peptide bonds in oligopeptides. Acts as a regulatory subunit for PP2A-like phosphatases modulating their activity or substrate specificity, probably by inducing a conformational change in the catalytic subunit, a direct target of the PPIase. Can reactivate inactive phosphatase PP2A-phosphatase methylesterase complexes (PP2Ai) in presence of ATP and Mg(2+) by dissociating the inactive form from the complex. This is Serine/threonine-protein phosphatase 2A activator 2 (RRD2) from Eremothecium gossypii (strain ATCC 10895 / CBS 109.51 / FGSC 9923 / NRRL Y-1056) (Yeast).